A 574-amino-acid chain; its full sequence is Zinc finger and BTB domain-containing protein 3 (574 aa).

Residues 74–142 (CDCTVMVGST…MYAGQLTLRG (69 aa)) form the BTB domain. Disordered regions lie at residues 175-277 (AEAD…SSTE) and 305-346 (SLRV…APAP). Residues lysine 181 and lysine 182 each participate in a glycyl lysine isopeptide (Lys-Gly) (interchain with G-Cter in SUMO2) cross-link. Over residues 187–212 (NSQLPSLEFLSSTSRGTQPSLASAET) the composition is skewed to polar residues. The span at 323–334 (PPASAPTSAPAP) shows a compositional bias: low complexity. Position 362 is a phosphoserine (serine 362). The interval 364-403 (EETDVSDEQPQGPERAFPSGGAVYGAQPSQPEAFEDPGAA) is disordered. 2 C2H2-type zinc fingers span residues 472–494 (PTCK…ATVH) and 500–523 (YECR…RKAH). The segment covering 526 to 535 (DLAKRSKPDP) has biased composition (basic and acidic residues). A disordered region spans residues 526-574 (DLAKRSKPDPEVGPLLGVQPLPGSPTADRQSSSGGGPPKDFVLAPKTNI). Lysine 532 is covalently cross-linked (Glycyl lysine isopeptide (Lys-Gly) (interchain with G-Cter in SUMO2)). Serine 549 carries the post-translational modification Phosphoserine.

It localises to the nucleus. In terms of biological role, may be involved in transcriptional regulation. The chain is Zinc finger and BTB domain-containing protein 3 (ZBTB3) from Homo sapiens (Human).